The following is a 224-amino-acid chain: Ribose-5-phosphate isomerase A (224 aa).

Substrate is bound by residues 34–37 (TGST), 87–90 (DGAD), and 100–103 (KGGG). Glu-109 functions as the Proton acceptor in the catalytic mechanism. Residue Lys-127 coordinates substrate.

Belongs to the ribose 5-phosphate isomerase family. As to quaternary structure, homodimer.

The enzyme catalyses aldehydo-D-ribose 5-phosphate = D-ribulose 5-phosphate. It participates in carbohydrate degradation; pentose phosphate pathway; D-ribose 5-phosphate from D-ribulose 5-phosphate (non-oxidative stage): step 1/1. Catalyzes the reversible conversion of ribose-5-phosphate to ribulose 5-phosphate. The protein is Ribose-5-phosphate isomerase A of Francisella tularensis subsp. tularensis (strain FSC 198).